We begin with the raw amino-acid sequence, 469 residues long: Citrate synthase, mitochondrial (469 aa).

The transit peptide at methionine 1–serine 30 directs the protein to the mitochondrion. Catalysis depends on residues histidine 304 and histidine 350. Arginine 359 is an oxaloacetate binding site. Aspartate 405 is an active-site residue. Residues arginine 431 and arginine 451 each coordinate oxaloacetate.

Belongs to the citrate synthase family. In terms of assembly, homodimer.

Its subcellular location is the mitochondrion matrix. It carries out the reaction oxaloacetate + acetyl-CoA + H2O = citrate + CoA + H(+). The protein operates within carbohydrate metabolism; tricarboxylic acid cycle; isocitrate from oxaloacetate: step 1/2. Its function is as follows. Key enzyme of the Krebs tricarboxylic acid cycle which catalyzes the synthesis of citrate from acetyl coenzyme A and oxaloacetate. The protein is Citrate synthase, mitochondrial (cs) of Katsuwonus pelamis (Skipjack tuna).